Consider the following 258-residue polypeptide: Acyl-[acyl-carrier-protein]--UDP-N-acetylglucosamine O-acyltransferase (258 aa).

Belongs to the transferase hexapeptide repeat family. LpxA subfamily. In terms of assembly, homotrimer.

The protein localises to the cytoplasm. The catalysed reaction is a (3R)-hydroxyacyl-[ACP] + UDP-N-acetyl-alpha-D-glucosamine = a UDP-3-O-[(3R)-3-hydroxyacyl]-N-acetyl-alpha-D-glucosamine + holo-[ACP]. It functions in the pathway glycolipid biosynthesis; lipid IV(A) biosynthesis; lipid IV(A) from (3R)-3-hydroxytetradecanoyl-[acyl-carrier-protein] and UDP-N-acetyl-alpha-D-glucosamine: step 1/6. Its function is as follows. Involved in the biosynthesis of lipid A, a phosphorylated glycolipid that anchors the lipopolysaccharide to the outer membrane of the cell. The chain is Acyl-[acyl-carrier-protein]--UDP-N-acetylglucosamine O-acyltransferase from Halorhodospira halophila (strain DSM 244 / SL1) (Ectothiorhodospira halophila (strain DSM 244 / SL1)).